We begin with the raw amino-acid sequence, 361 residues long: G2/mitotic-specific cyclin-B1 (361 aa).

Over residues Met-1–Asn-13 the composition is skewed to polar residues. The interval Met-1–Asn-33 is disordered.

It belongs to the cyclin family. Cyclin AB subfamily. Interacts with the CDK1 protein kinase to form a serine/threonine kinase holoenzyme complex also known as maturation promoting factor (MPF). The cyclin subunit imparts substrate specificity to the complex. Interacts with E3 ubiquitin-protein ligase etc-1. Post-translationally, ubiquitinated by etc-1 likely during meiosis, resulting in its degradation.

The protein localises to the cytoplasm. Essential for the control of the cell cycle at the G2/M (mitosis) transition. This Caenorhabditis elegans protein is G2/mitotic-specific cyclin-B1 (cyb-1).